We begin with the raw amino-acid sequence, 246 residues long: Orotidine 5'-phosphate decarboxylase (246 aa).

Substrate-binding positions include Asp22, Lys44, 71–80 (DLKYHDIPHT), Thr130, Arg191, Gln201, Gly221, and Arg222. Lys73 acts as the Proton donor in catalysis.

The protein belongs to the OMP decarboxylase family. Type 1 subfamily. As to quaternary structure, homodimer.

It carries out the reaction orotidine 5'-phosphate + H(+) = UMP + CO2. It participates in pyrimidine metabolism; UMP biosynthesis via de novo pathway; UMP from orotate: step 2/2. Catalyzes the decarboxylation of orotidine 5'-monophosphate (OMP) to uridine 5'-monophosphate (UMP). The chain is Orotidine 5'-phosphate decarboxylase from Neisseria meningitidis serogroup A / serotype 4A (strain DSM 15465 / Z2491).